The chain runs to 320 residues: Probable L,D-transpeptidase YcfS (320 aa).

A signal peptide spans 1–23 (MMIKTRFSRWLTFFTFAAAVALA). Residues 45–90 (KFHVVENDGGSLEAIAKKYNVGFLALLQANPGVDPYVPRAGSVLTI) form the LysM domain. Residues 102-241 (EGIVINIAEL…VTPGTKVNII (140 aa)) enclose the L,D-TPase catalytic domain. His201 (proton donor/acceptor) is an active-site residue. Cys217 (nucleophile) is an active-site residue.

It belongs to the YkuD family. Interacts with DsbG.

The protein resides in the periplasm. The protein operates within cell wall biogenesis; peptidoglycan biosynthesis. Responsible, at least in part, for anchoring of the major outer membrane lipoprotein (Lpp, also known as the Braun lipoprotein) to the peptidoglycan via a meso-diaminopimelyl-L-Lys- bond on the terminal residue of Lpp. The sequence is that of Probable L,D-transpeptidase YcfS (ycfS) from Escherichia coli (strain K12).